A 387-amino-acid chain; its full sequence is Erythronate-4-phosphate dehydrogenase (387 aa).

Ser45 and Thr67 together coordinate substrate. Asp147 is an NAD(+) binding site. The active site involves Arg208. Asp232 is an NAD(+) binding site. Glu237 is a catalytic residue. Residue His254 is the Proton donor of the active site. Gly257 is an NAD(+) binding site. Residue Tyr258 coordinates substrate.

The protein belongs to the D-isomer specific 2-hydroxyacid dehydrogenase family. PdxB subfamily. As to quaternary structure, homodimer.

Its subcellular location is the cytoplasm. It carries out the reaction 4-phospho-D-erythronate + NAD(+) = (R)-3-hydroxy-2-oxo-4-phosphooxybutanoate + NADH + H(+). The protein operates within cofactor biosynthesis; pyridoxine 5'-phosphate biosynthesis; pyridoxine 5'-phosphate from D-erythrose 4-phosphate: step 2/5. In terms of biological role, catalyzes the oxidation of erythronate-4-phosphate to 3-hydroxy-2-oxo-4-phosphonooxybutanoate. The protein is Erythronate-4-phosphate dehydrogenase of Shewanella sediminis (strain HAW-EB3).